The following is a 378-amino-acid chain: uncharacterized protein (378 aa).

Zn(2+)-binding residues include C38, H60, C90, C93, C96, and C104.

It belongs to the zinc-containing alcohol dehydrogenase family. Class-III subfamily. Zn(2+) serves as cofactor.

This is an uncharacterized protein from Bacillus subtilis (strain 168).